The primary structure comprises 272 residues: Imidazole glycerol phosphate synthase subunit HisF (272 aa).

Active-site residues include D11 and D130.

It belongs to the HisA/HisF family. In terms of assembly, heterodimer of HisH and HisF.

The protein localises to the cytoplasm. The catalysed reaction is 5-[(5-phospho-1-deoxy-D-ribulos-1-ylimino)methylamino]-1-(5-phospho-beta-D-ribosyl)imidazole-4-carboxamide + L-glutamine = D-erythro-1-(imidazol-4-yl)glycerol 3-phosphate + 5-amino-1-(5-phospho-beta-D-ribosyl)imidazole-4-carboxamide + L-glutamate + H(+). Its pathway is amino-acid biosynthesis; L-histidine biosynthesis; L-histidine from 5-phospho-alpha-D-ribose 1-diphosphate: step 5/9. Functionally, IGPS catalyzes the conversion of PRFAR and glutamine to IGP, AICAR and glutamate. The HisF subunit catalyzes the cyclization activity that produces IGP and AICAR from PRFAR using the ammonia provided by the HisH subunit. The polypeptide is Imidazole glycerol phosphate synthase subunit HisF (Methanococcus maripaludis (strain C7 / ATCC BAA-1331)).